A 207-amino-acid chain; its full sequence is Small ribosomal subunit protein uS4 (207 aa).

Positions 31-56 (KCKLDSKPGQHGRTSGARTSDYGNQL) are disordered. Residues 42–53 (GRTSGARTSDYG) are compositionally biased toward polar residues. An S4 RNA-binding domain is found at 97-157 (ARLDNVVYRM…EKSKKQVRIV (61 aa)).

The protein belongs to the universal ribosomal protein uS4 family. As to quaternary structure, part of the 30S ribosomal subunit. Contacts protein S5. The interaction surface between S4 and S5 is involved in control of translational fidelity.

Functionally, one of the primary rRNA binding proteins, it binds directly to 16S rRNA where it nucleates assembly of the body of the 30S subunit. With S5 and S12 plays an important role in translational accuracy. The sequence is that of Small ribosomal subunit protein uS4 from Janthinobacterium sp. (strain Marseille) (Minibacterium massiliensis).